The following is a 322-amino-acid chain: HPr kinase/phosphorylase (322 aa).

Active-site residues include His153 and Lys174. 168-175 (GRSGLGKS) provides a ligand contact to ATP. Mg(2+) is bound at residue Ser175. The active-site Proton acceptor; for phosphorylation activity. Proton donor; for dephosphorylation activity is the Asp192. Positions 217–226 (MEIRGLGVVD) are important for the catalytic mechanism of both phosphorylation and dephosphorylation. Glu218 lines the Mg(2+) pocket. Residue Arg259 is part of the active site. The important for the catalytic mechanism of dephosphorylation stretch occupies residues 280 to 285 (PIFPGK).

The protein belongs to the HPrK/P family. In terms of assembly, homohexamer. It depends on Mg(2+) as a cofactor.

It carries out the reaction [HPr protein]-L-serine + ATP = [HPr protein]-O-phospho-L-serine + ADP + H(+). It catalyses the reaction [HPr protein]-O-phospho-L-serine + phosphate + H(+) = [HPr protein]-L-serine + diphosphate. Its function is as follows. Catalyzes the ATP- as well as the pyrophosphate-dependent phosphorylation of a specific serine residue in HPr, a phosphocarrier protein of the phosphoenolpyruvate-dependent sugar phosphotransferase system (PTS). HprK/P also catalyzes the pyrophosphate-producing, inorganic phosphate-dependent dephosphorylation (phosphorolysis) of seryl-phosphorylated HPr (P-Ser-HPr). The protein is HPr kinase/phosphorylase of Chlorobium phaeobacteroides (strain DSM 266 / SMG 266 / 2430).